A 158-amino-acid polypeptide reads, in one-letter code: 2-C-methyl-D-erythritol 2,4-cyclodiphosphate synthase (158 aa).

Residues aspartate 9 and histidine 11 each coordinate a divalent metal cation. Residues 9–11 (DVH) and 35–36 (HS) each bind 4-CDP-2-C-methyl-D-erythritol 2-phosphate. Histidine 43 contributes to the a divalent metal cation binding site. Residues 57-59 (DIG), 62-66 (FPDTD), 101-107 (AQKPKMA), 133-136 (TTTE), phenylalanine 140, and arginine 143 each bind 4-CDP-2-C-methyl-D-erythritol 2-phosphate.

It belongs to the IspF family. In terms of assembly, homotrimer. The cofactor is a divalent metal cation.

It carries out the reaction 4-CDP-2-C-methyl-D-erythritol 2-phosphate = 2-C-methyl-D-erythritol 2,4-cyclic diphosphate + CMP. Its pathway is isoprenoid biosynthesis; isopentenyl diphosphate biosynthesis via DXP pathway; isopentenyl diphosphate from 1-deoxy-D-xylulose 5-phosphate: step 4/6. Functionally, involved in the biosynthesis of isopentenyl diphosphate (IPP) and dimethylallyl diphosphate (DMAPP), two major building blocks of isoprenoid compounds. Catalyzes the conversion of 4-diphosphocytidyl-2-C-methyl-D-erythritol 2-phosphate (CDP-ME2P) to 2-C-methyl-D-erythritol 2,4-cyclodiphosphate (ME-CPP) with a corresponding release of cytidine 5-monophosphate (CMP). In Bacillus cereus (strain B4264), this protein is 2-C-methyl-D-erythritol 2,4-cyclodiphosphate synthase.